A 229-amino-acid chain; its full sequence is Large ribosomal subunit protein uL1 (229 aa).

The protein belongs to the universal ribosomal protein uL1 family. As to quaternary structure, part of the 50S ribosomal subunit.

Functionally, binds directly to 23S rRNA. The L1 stalk is quite mobile in the ribosome, and is involved in E site tRNA release. Protein L1 is also a translational repressor protein, it controls the translation of the L11 operon by binding to its mRNA. The polypeptide is Large ribosomal subunit protein uL1 (Streptococcus uberis (strain ATCC BAA-854 / 0140J)).